The chain runs to 165 residues: MSDRRLEAVGLGELKVADRPDQVLVCYGLGSCVGLALYDPVVRIGAMVHVVLPDSSMGRGREAPPGKYADTGVEAAVAALVDAGASRSRLIAKAAGGARMLRLAGSNPQLDIGARNTEAVRAALARHQIRLVAEDMGGTYGRTLQLFIETGRVLVSTVGRGEHEL.

It belongs to the CheD family.

The catalysed reaction is L-glutaminyl-[protein] + H2O = L-glutamyl-[protein] + NH4(+). In terms of biological role, probably deamidates glutamine residues to glutamate on methyl-accepting chemotaxis receptors (MCPs), playing an important role in chemotaxis. This Symbiobacterium thermophilum (strain DSM 24528 / JCM 14929 / IAM 14863 / T) protein is Probable chemoreceptor glutamine deamidase CheD.